The sequence spans 420 residues: Protein ECERIFERUM 26-like (420 aa).

It belongs to the plant acyltransferase family. As to expression, highly expressed in flowers. Expressed in leaves.

Functionally, involved in biosynthesis of the epicuticular wax. Plays a role in very-long-chain fatty acid (VLCFA) biosynthesis and is required for VLCFA elongation in leaf. Despite its classification as a BAHD acyltransferase based on sequence homology, CER26L does not seem to share the catalytic mechanism of the members of the BAHD family. In Arabidopsis thaliana (Mouse-ear cress), this protein is Protein ECERIFERUM 26-like (CER26L).